The following is a 138-amino-acid chain: Ribosome-binding factor A (138 aa).

Residues 112–138 form a disordered region; that stretch reads EARTQGQAPAADVEPAPGAAPDDEAEE. A compositionally biased stretch (low complexity) spans 119 to 131; that stretch reads APAADVEPAPGAA.

The protein belongs to the RbfA family. Monomer. Binds 30S ribosomal subunits, but not 50S ribosomal subunits or 70S ribosomes.

Its subcellular location is the cytoplasm. Functionally, one of several proteins that assist in the late maturation steps of the functional core of the 30S ribosomal subunit. Associates with free 30S ribosomal subunits (but not with 30S subunits that are part of 70S ribosomes or polysomes). Required for efficient processing of 16S rRNA. May interact with the 5'-terminal helix region of 16S rRNA. This chain is Ribosome-binding factor A, found in Anaeromyxobacter sp. (strain K).